The primary structure comprises 470 residues: Protein C-ets-2 (470 aa).

The PNT domain maps to 85–170; that stretch reads ATFSGFKKEQ…EHLEQMIKEN (86 aa). Ser-225 is modified (phosphoserine). The disordered stretch occupies residues 270-291; it reads ASGKPRDHDSAETGGDSFESSE. A phosphoserine mark is found at Ser-296, Ser-299, and Ser-302. Positions 364 to 444 form a DNA-binding region, ETS; it reads IQLWQFLLEL…SGKRYVYRFV (81 aa).

It belongs to the ETS family. Phosphorylation by CDK10 at Ser-225 may create a phosphodegron that targets ETS2 for proteasomal degradation.

The protein localises to the nucleus. In terms of biological role, transcription factor activating transcription. Binds specifically the GGA DNA motif in gene promoters and stimulates transcription of those genes. The chain is Protein C-ets-2 (ETS2) from Bos taurus (Bovine).